Consider the following 552-residue polypeptide: BAR/IMD domain-containing adapter protein 2 (552 aa).

The IMD domain maps to 1–250; it reads MSLSRSEEMH…VQLMQQVASN (250 aa). A coiled-coil region spans residues 132 to 153; the sequence is DALDKCQAELKKLRKKSQGSKN. S261 bears the Phosphoserine mark. Positions 295–369 are disordered; the sequence is STPIMNGVTG…TLPRSSSMAA (75 aa). Residue T296 is modified to Phosphothreonine. Low complexity predominate over residues 320-334; that stretch reads QPKSLSPPQSQSKLS. 3 positions are modified to phosphoserine: S323, S325, and S336. Position 340 is a phosphothreonine (T340). Position 346 is a phosphoserine (S346). Positions 348-367 are enriched in polar residues; the sequence is TPKNSYATTENKTLPRSSSM. T360 is modified (phosphothreonine). Phosphoserine is present on residues S366, S384, S395, and S454. Residues 374–437 enclose the SH3 domain; it reads NGRMRVKAIF…PFSYTRVLDS (64 aa). Positions 447-457 are enriched in polar residues; it reads LQQGKSSSTGN. 2 disordered regions span residues 447–466 and 525–552; these read LQQG…DLAI and TNDR…LAGR.

In terms of assembly, homodimer. Interacts with CDC42 and RAC1 that have been activated by GTP binding. Interacts with ATN1, ADGRB1, EPS8, SHANK1, SHANK2, SHANK3, WASF1 and WASF2. Interacts with ENAH after recruitment of CDC42. Interacts with TIAM1 and DIAPH1. Interacts (via SH3 domain) with E.coli effector protein EspF(U) (via PXXP motifs). Interacts with E.coli intimin receptor Tir. Post-translationally, phosphorylated on tyrosine residues by INSR in response to insulin treatment. As to expression, isoform 1 and isoform 4 are expressed almost exclusively in brain. Isoform 4 is barely detectable in placenta, prostate and testis. A short isoform is ubiquitous, with the highest expression in liver, prostate, testis and placenta.

The protein resides in the cytoplasm. Its subcellular location is the membrane. It is found in the cell projection. It localises to the filopodium. The protein localises to the ruffle. The protein resides in the cytoskeleton. Its function is as follows. Adapter protein that links membrane-bound small G-proteins to cytoplasmic effector proteins. Necessary for CDC42-mediated reorganization of the actin cytoskeleton and for RAC1-mediated membrane ruffling. Involved in the regulation of the actin cytoskeleton by WASF family members and the Arp2/3 complex. Plays a role in neurite growth. Acts syngeristically with ENAH to promote filipodia formation. Plays a role in the reorganization of the actin cytoskeleton in response to bacterial infection. Participates in actin bundling when associated with EPS8, promoting filopodial protrusions. This is BAR/IMD domain-containing adapter protein 2 (BAIAP2) from Homo sapiens (Human).